The sequence spans 172 residues: Adenine phosphoribosyltransferase (172 aa).

The protein belongs to the purine/pyrimidine phosphoribosyltransferase family. In terms of assembly, homodimer.

It localises to the cytoplasm. The enzyme catalyses AMP + diphosphate = 5-phospho-alpha-D-ribose 1-diphosphate + adenine. It participates in purine metabolism; AMP biosynthesis via salvage pathway; AMP from adenine: step 1/1. In terms of biological role, catalyzes a salvage reaction resulting in the formation of AMP, that is energically less costly than de novo synthesis. The sequence is that of Adenine phosphoribosyltransferase from Herpetosiphon aurantiacus (strain ATCC 23779 / DSM 785 / 114-95).